Consider the following 1537-residue polypeptide: Adhesion G protein-coupled receptor L3 (1537 aa).

The first 19 residues, 1–19, serve as a signal peptide directing secretion; the sequence is MWPPQLLILTMLLAPVVHG. Residues 20 to 943 lie on the Extracellular side of the membrane; sequence GKHNERHPAL…VKHSDAVHDL (924 aa). Positions 53–80 are disordered; sequence PAAERSTAHRGQGPRGAARGVRGPGAPG. Residues 103–192 enclose the SUEL-type lectin domain; it reads SCESYPIELR…KYLEVQYECV (90 aa). Cystine bridges form between Cys104-Cys134, Cys113-Cys191, Cys146-Cys178, Cys159-Cys165, and Cys203-Cys385. N-linked (GlcNAc...) asparagine glycosylation occurs at Asn161. The 260-residue stretch at 202–461 folds into the Olfactomedin-like domain; the sequence is LCPGLLKGVY…VVKYSLDFGP (260 aa). Residues 317 to 347 are interaction with FLRT3; sequence YHDTSPYRWGGKSDIDLAVDENGLWVIYATE. Residues Asp332, Asn380, Ala381, and Val435 each coordinate Ca(2+). The disordered stretch occupies residues 521–540; it reads RSTTASLPGRRNRSTSTPSP. Asn532, Asn617, Asn827, Asn840, Asn885, and Asn911 each carry an N-linked (GlcNAc...) asparagine glycan. The GAIN-B domain maps to 756–935; that stretch reads DIVRENTDNI…AVLMAHVEVK (180 aa). Intrachain disulfides connect Cys886/Cys917 and Cys905/Cys919. Residues 886–935 form a GPS region; sequence CSFWSYSKRTMTGYWSTQGCRLLTTNKTHTTCSCNHLTNFAVLMAHVEVK. A stachel region spans residues 923–939; sequence TNFAVLMAHVEVKHSDA. Residues 944–969 form a helical membrane-spanning segment; the sequence is LLDVITWVGILLSLVCLLICIFTFCF. The Cytoplasmic portion of the chain corresponds to 970–975; the sequence is FRGLQS. Residues 976–999 form a helical membrane-spanning segment; sequence DRNTIHKNLCISLFVAELLFLIGI. A glycan (N-linked (GlcNAc...) asparagine) is linked at Asn1000. The Extracellular portion of the chain corresponds to 1000-1006; sequence NRTDQPI. A helical membrane pass occupies residues 1007–1034; it reads ACAVFAALLHFFFLAAFTWMFLEGVQLY. Cys1008 and Cys1080 are joined by a disulfide. Over 1035 to 1048 the chain is Cytoplasmic; the sequence is IMLVEVFESEHSRR. The chain crosses the membrane as a helical span at residues 1049-1071; it reads KYFYLVGYGMPALIVAVSAAVDY. At 1072-1086 the chain is on the extracellular side; it reads RSYGTDKVCWLRLDT. Residues 1087-1112 form a helical membrane-spanning segment; that stretch reads YFIWSFIGPATLIIMLNVIFLGIALY. The Cytoplasmic segment spans residues 1113–1142; that stretch reads KMFHHTAILKPESGCLDNINYEDNRPFIKS. A helical transmembrane segment spans residues 1143-1163; that stretch reads WVIGAIALLCLLGLTWAFGLM. The Extracellular portion of the chain corresponds to 1164–1168; the sequence is YINES. An N-linked (GlcNAc...) asparagine glycan is attached at Asn1166. The chain crosses the membrane as a helical span at residues 1169 to 1195; it reads TVIMAYLFTIFNSLQGMFIFIFHCVLQ. The Cytoplasmic segment spans residues 1196–1537; it reads KKVRKEYGKC…KGPAHLVTSL (342 aa). Residues 1213–1237 form a disordered region; the sequence is GKSTESSIGSGKTSGSRTPGRYSTG. Ser1254 and Ser1522 each carry phosphoserine. Positions 1512–1537 are disordered; sequence FIVPPNKDGASPEGTSKGPAHLVTSL. Residues 1532-1537 carry the PDZ-binding motif; it reads HLVTSL.

This sequence belongs to the G-protein coupled receptor 2 family. LN-TM7 subfamily. As to quaternary structure, heterodimer of 2 chains generated by proteolytic processing; the large extracellular N-terminal fragment and the membrane-bound C-terminal fragment predominantly remain associated and non-covalently linked. Interacts (via olfactomedin-like domain) with FLRT1 (via extracellular domain). Interacts (via olfactomedin-like domain) with FLRT2 (via extracellular domain). Interacts (via olfactomedin-like domain) with FLRT3 (via extracellular domain); the interaction is direct. Interacts (via extracellular domain) with TENM1. Interacts (via extracellular domain) with TENM2. Interacts (via extracellular domain) with TENM3. Identified in a complex with FLRT3 and UNC5B; does not interact with UNC5B by itself. Identified in a complex with FLRT3 and UNC5D; does not interact with UNC5D by itself. Interacts (via PDZ-binding motif) with SHANK3. Interacts (via PDZ-binding motif) with DLG4. In terms of processing, autoproteolytically processed at the GPS region of the GAIN-B domain; this cleavage modulates receptor activity. Post-translationally, O-glycosylated (major) and N-glycosylated. Localizes to postsynaptic spines in non-overlapping dendritic domains of CA1-region pyramidal neurons: specifically localizes to excitatory synapses in the S.oriens and S.radiatum, corresponding to distinct presynaptic inputs onto CA1-region pyramidal neurons.

Its subcellular location is the cell membrane. The protein localises to the postsynaptic cell membrane. It is found in the cell projection. The protein resides in the axon. It localises to the cell junction. Forms a heterodimer of 2 chains generated by proteolytic processing that remain associated through non-covalent interactions mediated by the GAIN-B domain. In the inactivated receptor, the Stachel sequence (also named stalk) is embedded in the GAIN-B domain, where it adopts a beta-strand conformation. On activation, the Stachel moves into the 7 transmembrane region and adopts a twisted hook-shaped configuration that forms contacts within the receptor, leading to coupling of a G-alpha protein, which activates signaling. The cleaved GAIN-B and N-terminal domains can then dissociate from the rest of the receptor. Its function is as follows. Orphan adhesion G-protein coupled receptor (aGPCR), which mediates synapse specificity. Ligand binding causes a conformation change that triggers signaling via guanine nucleotide-binding proteins (G proteins) and modulates the activity of downstream effectors. ADGRL3 is coupled with different classes of G alpha proteins, such as G(12)/G(13), G(s), G(i) or G(q), depending on the context. Coupling to G(12)/G(13) G proteins, which mediates the activation Rho small GTPases is the most efficient. Following G-protein coupled receptor activation, associates with cell adhesion molecules that are expressed at the surface of adjacent cells to direct synapse specificity. Specifically mediates the establishment of Schaffer-collateral synapses formed by CA3-region axons on CA1-region pyramidal neurons in the hippocampus. Localizes to postsynaptic spines in excitatory synapses in the S.oriens and S.radiatum and interacts with presynaptic cell adhesion molecules FLRT3 and TENM2, promoting synapse formation. Plays a role in the development of glutamatergic synapses in the cortex. Important in determining the connectivity rates between the principal neurons in the cortex. Functionally, orphan adhesion G-protein coupled receptor (aGPCR), which mediates synapse specificity. Ligand binding causes a conformation change that triggers signaling via guanine nucleotide-binding proteins (G proteins) and modulates the activity of downstream effectors, such as adenylate cyclase. Isoform 1 is specifically coupled to G(s) G proteins and mediates activation of adenylate cyclase activity. Following G-protein coupled receptor activation, undergoes liquid-liquid phase transition, associates with (1) cell adhesion molecules that are expressed at the surface of adjacent cells, as well as (2) PDZ-containing proteins, such as SHANK3 and DLG4, in the cytoplasm to direct synapse formation. In terms of biological role, orphan adhesion G-protein coupled receptor (aGPCR). Ligand binding causes a conformation change that triggers signaling via guanine nucleotide-binding proteins (G proteins) and modulates the activity of downstream effectors, such as RhoA pathway. Isoform 7 is coupled to G(12) and/or G(13) G proteins (GNA12 and GNA13, respectively) and mediates the activation Rho small GTPases. This is Adhesion G protein-coupled receptor L3 from Mus musculus (Mouse).